The following is a 174-amino-acid chain: Large ribosomal subunit protein bL17 (174 aa).

Belongs to the bacterial ribosomal protein bL17 family. Part of the 50S ribosomal subunit. Contacts protein L32.

The polypeptide is Large ribosomal subunit protein bL17 (Ruminiclostridium cellulolyticum (strain ATCC 35319 / DSM 5812 / JCM 6584 / H10) (Clostridium cellulolyticum)).